The following is a 217-amino-acid chain: MKRVIYKTIFCGLTLLTSLSSCSLDPKGYNLETKNSRDLNQESVILKENRETPSLVKRLSRRSRRLFARRDQTQKDTLQVQANFKTYAEKISEQDERDLSFVVSSAAEKSSISLALSQGEIKDALYRIREVHPLALIEALAENPALIEGMKKMQGRDWIWNLFLTQLSEVFSQAWSQGVISEEDIAAFASTLGLDSGTVASIVQGERWPELVDIVIT.

An N-terminal signal peptide occupies residues Met-1–Ser-21. The N-palmitoyl cysteine moiety is linked to residue Cys-22. A lipid anchor (S-diacylglycerol cysteine) is attached at Cys-22.

The protein belongs to the chlamydial CPn_0875/CT_734/TC_0107 family.

The protein resides in the cell membrane. The polypeptide is Probable lipoprotein CPn_0875/CP_0994/CPj0875/CpB0904 (Chlamydia pneumoniae (Chlamydophila pneumoniae)).